Consider the following 372-residue polypeptide: Germination protease (372 aa).

Positions 1–15 are excised as a propeptide; sequence MVKELNLEQYNVRTD.

Belongs to the peptidase A25 family. Homotetramer. In terms of processing, autoproteolytically processed. The inactive tetrameric zymogen termed p46 autoprocesses to a smaller form termed p41, which is active only during spore germination.

The catalysed reaction is Endopeptidase action with P4 Glu or Asp, P1 preferably Glu &gt; Asp, P1' hydrophobic and P2' Ala.. Functionally, initiates the rapid degradation of small, acid-soluble proteins during spore germination. The sequence is that of Germination protease from Halalkalibacterium halodurans (strain ATCC BAA-125 / DSM 18197 / FERM 7344 / JCM 9153 / C-125) (Bacillus halodurans).